The following is a 101-amino-acid chain: DNA-directed RNA polymerase subunit omega (101 aa).

Positions 1-13 are enriched in low complexity; that stretch reads MSSTPAAASATPS. Residues 1-22 are disordered; the sequence is MSSTPAAASATPSHGALPAYDT.

The protein belongs to the RNA polymerase subunit omega family. In terms of assembly, the RNAP catalytic core consists of 2 alpha, 1 beta, 1 beta' and 1 omega subunit. When a sigma factor is associated with the core the holoenzyme is formed, which can initiate transcription.

It catalyses the reaction RNA(n) + a ribonucleoside 5'-triphosphate = RNA(n+1) + diphosphate. Its function is as follows. Promotes RNA polymerase assembly. Latches the N- and C-terminal regions of the beta' subunit thereby facilitating its interaction with the beta and alpha subunits. The polypeptide is DNA-directed RNA polymerase subunit omega (Rhodococcus jostii (strain RHA1)).